Reading from the N-terminus, the 278-residue chain is Probable endonuclease 4 (278 aa).

Residues His67, His107, Glu141, Asp173, His176, His210, Asp223, His225, and Glu255 each coordinate Zn(2+).

Belongs to the AP endonuclease 2 family. The cofactor is Zn(2+).

The enzyme catalyses Endonucleolytic cleavage to 5'-phosphooligonucleotide end-products.. Endonuclease IV plays a role in DNA repair. It cleaves phosphodiester bonds at apurinic or apyrimidinic (AP) sites, generating a 3'-hydroxyl group and a 5'-terminal sugar phosphate. The polypeptide is Probable endonuclease 4 (Natronomonas pharaonis (strain ATCC 35678 / DSM 2160 / CIP 103997 / JCM 8858 / NBRC 14720 / NCIMB 2260 / Gabara) (Halobacterium pharaonis)).